Reading from the N-terminus, the 388-residue chain is FMRFamide neuropeptides (388 aa).

Residues 1–21 (MVAPLLVFLFSLQLCHTTSWA) form the signal peptide. A propeptide spanning residues 22–172 (YVGGNSLNSN…SNHQVIRDSR (151 aa)) is cleaved from the precursor. The interval 40-74 (FPAGTSNEVPEDAANGQDDNDDSQLTEPNDNNAPL) is disordered. Over residues 64–74 (LTEPNDNNAPL) the composition is skewed to polar residues. Phe-179, Phe-196, Phe-208, Phe-219, Phe-230, Phe-241, Phe-253, Phe-265, Phe-277, Phe-289, Phe-301, Phe-313, Phe-325, Phe-337, Phe-346, Phe-359, and Phe-372 each carry phenylalanine amide. The disordered stretch occupies residues 360–388 (GRTPTQSSDFMRFGKSLDKSENKTSDLQK). A compositionally biased stretch (basic and acidic residues) spans 374-388 (KSLDKSENKTSDLQK). Positions 375 to 388 (SLDKSENKTSDLQK) are excised as a propeptide.

The protein belongs to the FARP (FMRFamide related peptide) family. In terms of tissue distribution, in the brain, expressed in 2 large cells in the lateral neurons in each optic lobe, 2 slightly bigger cells on both sides of the tritocerebrum, around 14 small cells in the dorsal area, around 13 cells in the subesophageal ganglion, and in the central brain.

Its subcellular location is the secreted. This Musca domestica (House fly) protein is FMRFamide neuropeptides.